Consider the following 233-residue polypeptide: uncharacterized protein (233 aa).

3 consecutive transmembrane segments (helical) span residues 78–98, 113–133, and 188–208; these read FCLI…PVMY, FITC…LFKL, and FLLI…YGTI.

Its subcellular location is the membrane. This is an uncharacterized protein from Saccharomyces cerevisiae (strain ATCC 204508 / S288c) (Baker's yeast).